A 231-amino-acid chain; its full sequence is Large ribosomal subunit protein uL1 (231 aa).

This sequence belongs to the universal ribosomal protein uL1 family. As to quaternary structure, part of the 50S ribosomal subunit.

In terms of biological role, binds directly to 23S rRNA. The L1 stalk is quite mobile in the ribosome, and is involved in E site tRNA release. Functionally, protein L1 is also a translational repressor protein, it controls the translation of the L11 operon by binding to its mRNA. This Shouchella clausii (strain KSM-K16) (Alkalihalobacillus clausii) protein is Large ribosomal subunit protein uL1.